The primary structure comprises 40 residues: Dermonecrotic toxin LgSicTox-alphaI-1 (40 aa).

Residues Glu-32 and Asp-34 each coordinate Mg(2+).

The protein belongs to the arthropod phospholipase D family. Class II subfamily. Mg(2+) serves as cofactor. Post-translationally, contains 2 disulfide bonds. Expressed by the venom gland.

The protein localises to the secreted. The enzyme catalyses an N-(acyl)-sphingosylphosphocholine = an N-(acyl)-sphingosyl-1,3-cyclic phosphate + choline. It catalyses the reaction an N-(acyl)-sphingosylphosphoethanolamine = an N-(acyl)-sphingosyl-1,3-cyclic phosphate + ethanolamine. It carries out the reaction a 1-acyl-sn-glycero-3-phosphocholine = a 1-acyl-sn-glycero-2,3-cyclic phosphate + choline. The catalysed reaction is a 1-acyl-sn-glycero-3-phosphoethanolamine = a 1-acyl-sn-glycero-2,3-cyclic phosphate + ethanolamine. Its function is as follows. Dermonecrotic toxins cleave the phosphodiester linkage between the phosphate and headgroup of certain phospholipids (sphingolipid and lysolipid substrates), forming an alcohol (often choline) and a cyclic phosphate. This toxin acts on sphingomyelin (SM). It may also act on ceramide phosphoethanolamine (CPE), lysophosphatidylcholine (LPC) and lysophosphatidylethanolamine (LPE), but not on lysophosphatidylserine (LPS), and lysophosphatidylglycerol (LPG). It acts by transphosphatidylation, releasing exclusively cyclic phosphate products as second products. In vivo, intradermal injection induces dermonecrosis. Induces, hemolysis, vascular permeability, edema, inflammatory response, and platelet aggregation. The chain is Dermonecrotic toxin LgSicTox-alphaI-1 from Loxosceles gaucho (Spider).